Reading from the N-terminus, the 106-residue chain is UPF0145 protein NE1032 (106 aa).

Belongs to the UPF0145 family.

The protein is UPF0145 protein NE1032 of Nitrosomonas europaea (strain ATCC 19718 / CIP 103999 / KCTC 2705 / NBRC 14298).